Here is a 116-residue protein sequence, read N- to C-terminus: PTS system N,N'-diacetylchitobiose-specific EIIA component (116 aa).

One can recognise a PTS EIIA type-3 domain in the interval 15–113; that stretch reads EELEEVVMGL…ITELIELHEK (99 aa). His89 acts as the Tele-phosphohistidine intermediate in catalysis. His89 bears the Phosphohistidine; by HPr mark.

As to quaternary structure, forms a complex with ChbB (EIIB). ChbA is a homotrimer. It depends on Mg(2+) as a cofactor.

It is found in the cytoplasm. In terms of biological role, the phosphoenolpyruvate-dependent sugar phosphotransferase system (sugar PTS), a major carbohydrate active transport system, catalyzes the phosphorylation of incoming sugar substrates concomitantly with their translocation across the cell membrane. The enzyme II ChbABC PTS system is involved in the transport of the chitin disaccharide N,N'-diacetylchitobiose (GlcNAc2). The chain is PTS system N,N'-diacetylchitobiose-specific EIIA component (chbA) from Escherichia coli O157:H7.